We begin with the raw amino-acid sequence, 369 residues long: Protein RecA (369 aa).

77-84 (GPESSGKT) contacts ATP.

The protein belongs to the RecA family.

It is found in the cytoplasm. Can catalyze the hydrolysis of ATP in the presence of single-stranded DNA, the ATP-dependent uptake of single-stranded DNA by duplex DNA, and the ATP-dependent hybridization of homologous single-stranded DNAs. It interacts with LexA causing its activation and leading to its autocatalytic cleavage. This chain is Protein RecA, found in Corynebacterium pseudotuberculosis (strain C231).